A 179-amino-acid polypeptide reads, in one-letter code: ATP synthase subunit b (179 aa).

Residues Ile23–Pro43 form a helical membrane-spanning segment.

The protein belongs to the ATPase B chain family. F-type ATPases have 2 components, F(1) - the catalytic core - and F(0) - the membrane proton channel. F(1) has five subunits: alpha(3), beta(3), gamma(1), delta(1), epsilon(1). F(0) has three main subunits: a(1), b(2) and c(10-14). The alpha and beta chains form an alternating ring which encloses part of the gamma chain. F(1) is attached to F(0) by a central stalk formed by the gamma and epsilon chains, while a peripheral stalk is formed by the delta and b chains.

Its subcellular location is the cell membrane. F(1)F(0) ATP synthase produces ATP from ADP in the presence of a proton or sodium gradient. F-type ATPases consist of two structural domains, F(1) containing the extramembraneous catalytic core and F(0) containing the membrane proton channel, linked together by a central stalk and a peripheral stalk. During catalysis, ATP synthesis in the catalytic domain of F(1) is coupled via a rotary mechanism of the central stalk subunits to proton translocation. Functionally, component of the F(0) channel, it forms part of the peripheral stalk, linking F(1) to F(0). The chain is ATP synthase subunit b from Salinispora arenicola (strain CNS-205).